The following is a 257-amino-acid chain: Acetylglutamate kinase (257 aa).

Substrate contacts are provided by residues 43–44 (GG), Arg65, and Asn157. ATP-binding positions include 180–185 (DVSGIL) and 208–210 (IIT).

It belongs to the acetylglutamate kinase family. ArgB subfamily. Homodimer.

Its subcellular location is the cytoplasm. It carries out the reaction N-acetyl-L-glutamate + ATP = N-acetyl-L-glutamyl 5-phosphate + ADP. It functions in the pathway amino-acid biosynthesis; L-arginine biosynthesis; N(2)-acetyl-L-ornithine from L-glutamate: step 2/4. Functionally, catalyzes the ATP-dependent phosphorylation of N-acetyl-L-glutamate. The chain is Acetylglutamate kinase from Enterobacter sp. (strain 638).